A 321-amino-acid chain; its full sequence is tRNA dimethylallyltransferase (321 aa).

24-31 (GPTASGKS) contributes to the ATP binding site. 26–31 (TASGKS) contributes to the substrate binding site. Interaction with substrate tRNA stretches follow at residues 49–52 (DSMQ) and 172–176 (QRIVR).

The protein belongs to the IPP transferase family. In terms of assembly, monomer. Requires Mg(2+) as cofactor.

The enzyme catalyses adenosine(37) in tRNA + dimethylallyl diphosphate = N(6)-dimethylallyladenosine(37) in tRNA + diphosphate. Functionally, catalyzes the transfer of a dimethylallyl group onto the adenine at position 37 in tRNAs that read codons beginning with uridine, leading to the formation of N6-(dimethylallyl)adenosine (i(6)A). The polypeptide is tRNA dimethylallyltransferase (Mesorhizobium japonicum (strain LMG 29417 / CECT 9101 / MAFF 303099) (Mesorhizobium loti (strain MAFF 303099))).